Consider the following 901-residue polypeptide: Protein translocase subunit SecA (901 aa).

ATP-binding positions include Q87, 105–109, and D512; that span reads GEGKT. Residues 859–901 form a disordered region; it reads HQDDDSAAAAALAAQTGERKVGRNDPCPCGSGKKYKQCHGRLQ. Zn(2+)-binding residues include C885, C887, C896, and H897. Positions 891 to 901 are enriched in basic residues; the sequence is KKYKQCHGRLQ.

It belongs to the SecA family. Monomer and homodimer. Part of the essential Sec protein translocation apparatus which comprises SecA, SecYEG and auxiliary proteins SecDF-YajC and YidC. It depends on Zn(2+) as a cofactor.

The protein resides in the cell inner membrane. Its subcellular location is the cytoplasm. The catalysed reaction is ATP + H2O + cellular proteinSide 1 = ADP + phosphate + cellular proteinSide 2.. Functionally, part of the Sec protein translocase complex. Interacts with the SecYEG preprotein conducting channel. Has a central role in coupling the hydrolysis of ATP to the transfer of proteins into and across the cell membrane, serving both as a receptor for the preprotein-SecB complex and as an ATP-driven molecular motor driving the stepwise translocation of polypeptide chains across the membrane. This is Protein translocase subunit SecA from Escherichia coli O9:H4 (strain HS).